We begin with the raw amino-acid sequence, 262 residues long: Type II restriction enzyme MspI (262 aa).

The enzyme catalyses Endonucleolytic cleavage of DNA to give specific double-stranded fragments with terminal 5'-phosphates.. In terms of biological role, a P subtype restriction enzyme that recognizes the double-stranded sequence 5'-CCGG-3' and cleaves after C-1. The protein is Type II restriction enzyme MspI (mspIR) of Moraxella sp.